The chain runs to 550 residues: Chaperonin GroEL (550 aa).

Residues 30-33 (TLGP), Lys-51, 87-91 (DGTTT), Gly-414, and Asp-494 contribute to the ATP site.

This sequence belongs to the chaperonin (HSP60) family. Forms a cylinder of 14 subunits composed of two heptameric rings stacked back-to-back. Interacts with the co-chaperonin GroES.

It is found in the cytoplasm. The enzyme catalyses ATP + H2O + a folded polypeptide = ADP + phosphate + an unfolded polypeptide.. Together with its co-chaperonin GroES, plays an essential role in assisting protein folding. The GroEL-GroES system forms a nano-cage that allows encapsulation of the non-native substrate proteins and provides a physical environment optimized to promote and accelerate protein folding. The sequence is that of Chaperonin GroEL from Buchnera aphidicola subsp. Thelaxes suberi.